The chain runs to 443 residues: ATP-dependent protease ATPase subunit HslU (443 aa).

ATP contacts are provided by residues Ile18, 60–65 (GVGKTE), Asp256, Glu321, and Arg393.

It belongs to the ClpX chaperone family. HslU subfamily. A double ring-shaped homohexamer of HslV is capped on each side by a ring-shaped HslU homohexamer. The assembly of the HslU/HslV complex is dependent on binding of ATP.

It is found in the cytoplasm. Functionally, ATPase subunit of a proteasome-like degradation complex; this subunit has chaperone activity. The binding of ATP and its subsequent hydrolysis by HslU are essential for unfolding of protein substrates subsequently hydrolyzed by HslV. HslU recognizes the N-terminal part of its protein substrates and unfolds these before they are guided to HslV for hydrolysis. The polypeptide is ATP-dependent protease ATPase subunit HslU (Shigella boydii serotype 18 (strain CDC 3083-94 / BS512)).